The sequence spans 261 residues: DNA-directed RNA polymerase subunit Rpo3 (261 aa).

Belongs to the archaeal Rpo3/eukaryotic RPB3 RNA polymerase subunit family. Part of the RNA polymerase complex.

The protein localises to the cytoplasm. It catalyses the reaction RNA(n) + a ribonucleoside 5'-triphosphate = RNA(n+1) + diphosphate. DNA-dependent RNA polymerase (RNAP) catalyzes the transcription of DNA into RNA using the four ribonucleoside triphosphates as substrates. The sequence is that of DNA-directed RNA polymerase subunit Rpo3 from Pyrococcus furiosus (strain ATCC 43587 / DSM 3638 / JCM 8422 / Vc1).